The sequence spans 79 residues: Protein SNA2 (79 aa).

At 1 to 6 (MHARDW) the chain is on the cytoplasmic side. A helical transmembrane segment spans residues 7–27 (FLVFIAIFIPPLAVWLKRGFF). The Vesicular portion of the chain corresponds to 28 to 32 (TKDLL). A helical membrane pass occupies residues 33–53 (INFLLFLLGFFPGLIHALYVI). Over 54–79 (SCHPYEENEARYSHLSSSDDNYGSLA) the chain is Cytoplasmic. Residues Ser71 and Ser77 each carry the phosphoserine modification.

It belongs to the UPF0057 (PMP3) family.

It is found in the membrane. The protein localises to the lipid droplet. The protein is Protein SNA2 (SNA2) of Saccharomyces cerevisiae (strain ATCC 204508 / S288c) (Baker's yeast).